We begin with the raw amino-acid sequence, 223 residues long: MAEHADTQALLRLVTWLSPAFPVGSFSYSGGLEQAIHQGLVTSADDLRLWCETLLERGNTWNDALLLSESYRAYGDAQRLIAVSELAEALAGSRERHMETMLLGEAFLAAAGHWPHPSLAVLGTKAAYPVSVGAVAGAHRTGLKPALAAFLNATVSNAVSVAIRCGITGQRDGVGVLARVEDTIGAVVARAAAASLEDLGGATFIAEIASLKHENLHSRLFRS.

The protein belongs to the UreF family. UreD, UreF and UreG form a complex that acts as a GTP-hydrolysis-dependent molecular chaperone, activating the urease apoprotein by helping to assemble the nickel containing metallocenter of UreC. The UreE protein probably delivers the nickel.

The protein resides in the cytoplasm. Functionally, required for maturation of urease via the functional incorporation of the urease nickel metallocenter. The protein is Urease accessory protein UreF of Sinorhizobium medicae (strain WSM419) (Ensifer medicae).